A 299-amino-acid polypeptide reads, in one-letter code: Prohibitin-2 (299 aa).

Ala-2 is modified (N-acetylalanine). A necessary for transcriptional repression region spans residues 19–49; it reads MGTALKLLLGAGAVAYGVRESVFTVEGGHRA. The residue at position 128 (Tyr-128) is a Phosphotyrosine. At Lys-147 the chain carries N6-acetyllysine. The necessary for transcriptional repression stretch occupies residues 150–174; that stretch reads ASQLITQRAQVSLLIRRELTERAKD. A Phosphoserine modification is found at Ser-151. Residues 190–238 adopt a coiled-coil conformation; sequence SREYTAAVEAKQVAQQEAQRAQFLVEKAKQEQRQKIVQAEGEAEAAKML. 4 positions are modified to N6-acetyllysine: Lys-200, Lys-236, Lys-250, and Lys-262.

The protein belongs to the prohibitin family. The mitochondrial prohibitin complex consists of two subunits (PHB1 and PHB2), assembled into a membrane-associated ring-shaped supercomplex of approximately 1 mDa. Interacts with ESR1, HDAC1 and HDAC5. Interacts with ZNF703. Interacts with STOML2. Interacts with ARFGEF3. Interacts with SPHK2. Interacts with COX4I1; the interaction associates PHB2 with COX. Interacts with MAP1LC3B (membrane-bound form LC3-II); the interaction is direct and upon mitochondrial depolarization and proteasome-dependent outer membrane rupture. Interacts with IGFBP6 (via C-terminal domain). Interacts with CLPB. Interacts with CD86 (via cytoplasmic domain); the interactions increases after priming with CD40. Interacts with AFG3L2. Interacts with DNAJC19. Interacts with AKT2; this interaction may be important for myogenic differentiation. Post-translationally, phosphorylated. Tyrosine phosphorylation is indirectly stimulated by IGFBP6.

It is found in the mitochondrion inner membrane. The protein localises to the cytoplasm. Its subcellular location is the nucleus. The protein resides in the cell membrane. Functionally, protein with pleiotropic attributes mediated in a cell-compartment- and tissue-specific manner, which include the plasma membrane-associated cell signaling functions, mitochondrial chaperone, and transcriptional co-regulator of transcription factors and sex steroid hormones in the nucleus. In the mitochondria, together with PHB, forms large ring complexes (prohibitin complexes) in the inner mitochondrial membrane (IMM) and functions as a chaperone protein that stabilizes mitochondrial respiratory enzymes and maintains mitochondrial integrity in the IMM, which is required for mitochondrial morphogenesis, neuronal survival, and normal lifespan. The prohibitin complex, with DNAJC19, regulates cardiolipin remodeling and the protein turnover of OMA1 in a cardiolipin-binding manner. Also regulates cytochrome-c oxidase assembly (COX) and mitochondrial respiration. Binding to sphingoid 1-phosphate (SPP) modulates its regulator activity. Has a key role of mitophagy receptor involved in targeting mitochondria for autophagic degradation. Involved in mitochondrial-mediated antiviral innate immunity, activates RIG-I-mediated signal transduction and production of IFNB1 and pro-inflammatory cytokine IL6. In terms of biological role, in the nucleus, serves as transcriptional co-regulator. Acts as a mediator of transcriptional repression by nuclear hormone receptors via recruitment of histone deacetylases. Functions as an estrogen receptor (ER)-selective coregulator that potentiates the inhibitory activities of antiestrogens and represses the activity of estrogens. Competes with NCOA1 for modulation of ER transcriptional activity. Its function is as follows. In the plasma membrane, is involved in IGFBP6-induced cell migration. Cooperates with CD86 to mediate CD86-signaling in B lymphocytes that regulates the level of IgG1 produced through the activation of distal signaling intermediates. Upon CD40 engagement, required to activate NF-kappa-B signaling pathway via phospholipase C and protein kinase C activation. The chain is Prohibitin-2 (PHB2) from Pongo abelii (Sumatran orangutan).